The sequence spans 590 residues: Cyclin-dependent kinase-like 3 (590 aa).

The region spanning 4-286 (YETLGKVGEG…SSDLLHHEYF (283 aa)) is the Protein kinase domain. ATP-binding positions include 10–18 (VGEGSYGTV) and Lys33. Residues 45–51 (KIAMREI) carry the [NKR]KIAxRE motif. Residue Asp125 is the Proton acceptor of the active site. Position 158 is a phosphothreonine (Thr158). Tyr160 carries the phosphotyrosine modification. Disordered stretches follow at residues 459–508 (RAKK…SNEN) and 547–590 (LKRE…PDVE). Residues 466–477 (SSQSIGQVMPNS) show a composition bias toward polar residues. 2 stretches are compositionally biased toward basic and acidic residues: residues 547 to 556 (LKRESKKTDS) and 580 to 590 (TERKKNLPDVE).

It belongs to the protein kinase superfamily. CMGC Ser/Thr protein kinase family. CDC2/CDKX subfamily.

It localises to the cytoplasm. The enzyme catalyses L-seryl-[protein] + ATP = O-phospho-L-seryl-[protein] + ADP + H(+). The catalysed reaction is L-threonyl-[protein] + ATP = O-phospho-L-threonyl-[protein] + ADP + H(+). This is Cyclin-dependent kinase-like 3 from Macaca fascicularis (Crab-eating macaque).